The chain runs to 747 residues: DNA repair and recombination protein RAD54-like (747 aa).

Positions 1-42 (MRRSLAPSQLARRKPEDRSSDDEDWQPGTVTPKKRKSSSETQ) are disordered. Residues 2 to 9 (RRSLAPSQ) form a required for chromatin remodeling, strand pairing activities and coupling of ATPase activity region. Ser38 carries the phosphoserine modification. The 176-residue stretch at 170–345 (SRRIPGSHGC…FSLVHFVNSG (176 aa)) folds into the Helicase ATP-binding domain. An ATP-binding site is contributed by 183-190 (DEMGLGKT). Residues 296–299 (DEGH) carry the DEGH box motif. The 154-residue stretch at 500–653 (VLDYILAVTR…CVVDEEQDVE (154 aa)) folds into the Helicase C-terminal domain. At Lys515 the chain carries N6-acetyllysine. Ser572 carries the post-translational modification Phosphoserine; by NEK1.

It belongs to the SNF2/RAD54 helicase family. As to quaternary structure, homohexamer. Interacts (via N-terminus) with RAD51. Interacts with NAP1L1. Interacts with BRD9; this interaction orchestrates RAD51-RAD54 complex formation. Acetylated. Acetylation promotes interaction with BRD9, and subsequently with RAD54, which is essential for homologous recombination (HR). Post-translationally, phosphorylated. Phosphorylation at Ser-572 by NEK1 specifically in G2 phase allows efficient removal of RAD51 filaments from DNA. Hardly detectable in most tissues. Dramatically increased in thymus, spleen and testis.

It localises to the nucleus. The enzyme catalyses ATP + H2O = ADP + phosphate + H(+). Functionally, plays an essential role in homologous recombination (HR) which is a major pathway for repairing DNA double-strand breaks (DSBs), single-stranded DNA (ssDNA) gaps, and stalled or collapsed replication forks. Acts as a molecular motor during the homology search and guides RAD51 ssDNA along a donor dsDNA thereby changing the homology search from the diffusion-based mechanism to a motor-guided mechanism. Plays also an essential role in RAD51-mediated synaptic complex formation which consists of three strands encased in a protein filament formed once homology is recognized. Once DNA strand exchange occured, dissociates RAD51 from nucleoprotein filaments formed on dsDNA. Deficiency also resulted in an increased frequency of end-to-end chromosome fusions involving telomeres compared to the controls, suggesting a putative role in telomere capping. Non-homologous end joining (NHEJ) and homologous recombination (HR) represent the two major pathways of DNA double-strand break (DSB) repair in eukaryotic cells. LIG4 and RAD54L cooperate to support cellular proliferation, repair spontaneous DSBs, and prevent chromosome and single chromatid aberrations. In Mus musculus (Mouse), this protein is DNA repair and recombination protein RAD54-like (Rad54l).